The chain runs to 419 residues: 5-methylthioadenosine/S-adenosylhomocysteine deaminase (419 aa).

Zn(2+)-binding residues include histidine 58 and histidine 60. Residues glutamate 87 and histidine 179 each contribute to the substrate site. Histidine 206 provides a ligand contact to Zn(2+). 2 residues coordinate substrate: glutamate 209 and aspartate 294. Aspartate 294 is a binding site for Zn(2+).

It belongs to the metallo-dependent hydrolases superfamily. MTA/SAH deaminase family. Requires Zn(2+) as cofactor.

The catalysed reaction is S-adenosyl-L-homocysteine + H2O + H(+) = S-inosyl-L-homocysteine + NH4(+). It catalyses the reaction S-methyl-5'-thioadenosine + H2O + H(+) = S-methyl-5'-thioinosine + NH4(+). Catalyzes the deamination of 5-methylthioadenosine and S-adenosyl-L-homocysteine into 5-methylthioinosine and S-inosyl-L-homocysteine, respectively. Is also able to deaminate adenosine. The polypeptide is 5-methylthioadenosine/S-adenosylhomocysteine deaminase (Pyrococcus furiosus (strain ATCC 43587 / DSM 3638 / JCM 8422 / Vc1)).